The primary structure comprises 460 residues: Argininosuccinate lyase (460 aa).

It belongs to the lyase 1 family. Argininosuccinate lyase subfamily.

It localises to the cytoplasm. It catalyses the reaction 2-(N(omega)-L-arginino)succinate = fumarate + L-arginine. It participates in amino-acid biosynthesis; L-arginine biosynthesis; L-arginine from L-ornithine and carbamoyl phosphate: step 3/3. This chain is Argininosuccinate lyase, found in Solibacter usitatus (strain Ellin6076).